Reading from the N-terminus, the 222-residue chain is Riboflavin kinase (222 aa).

Residues 1–94 (METIDAEDAA…AKIFDVKDEQ (94 aa)) are H-T-H motif-like. Positions 95–222 (YVLTGTVMSG…ENSEVVVVIG (128 aa)) are riboflavin kinase. Residue 104–109 (GVGEGR) participates in CDP binding. The Mg(2+) site is built by T133 and N135. 2 residues coordinate FMN: T190 and E198. 203 to 206 (TQLR) is a binding site for CDP.

It belongs to the archaeal riboflavin kinase family. It depends on Mg(2+) as a cofactor.

The enzyme catalyses riboflavin + CTP = CDP + FMN + H(+). It functions in the pathway cofactor biosynthesis; FMN biosynthesis; FMN from riboflavin (CTP route): step 1/1. Its function is as follows. Catalyzes the CTP-dependent phosphorylation of riboflavin (vitamin B2) to form flavin mononucleotide (FMN). The chain is Riboflavin kinase (ribK) from Methanocorpusculum labreanum (strain ATCC 43576 / DSM 4855 / Z).